The chain runs to 949 residues: Protocadherin alpha-11 (949 aa).

A signal peptide spans 1 to 29 (MFGFQRRGLGTPRLQLWLLLLEFWEVGSG). Cadherin domains lie at 30–133 (QLHY…PPVF), 157–242 (ASDA…DPEF), 243–349 (DKSE…SPEV), 350–454 (AVTS…APAF), 455–564 (AQPE…APAL), and 580–677 (VPRS…APKA). Residues 30 to 696 (QLHYSVSEEA…SPEAALVDVN (667 aa)) are Extracellular-facing. Residues Asn265 and Asn304 are each glycosylated (N-linked (GlcNAc...) asparagine). Asn547 carries an N-linked (GlcNAc...) asparagine glycan. The helical transmembrane segment at 697–717 (VYLIIAICVVSSLLVLTLLLY) threads the bilayer. At 718–949 (TALWWSATPT…GNSTTDNSDQ (232 aa)) the chain is on the cytoplasmic side. PXXP repeat units follow at residues 733–736 (PGKP) and 773–776 (PSLP). The segment at 733 to 893 (PGKPTLVCSR…PDKFIIPGSP (161 aa)) is 6 X 4 AA repeats of P-X-X-P. Disordered regions lie at residues 753–807 (RRQR…DWRY) and 826–949 (ILRA…NSDQ). Positions 780–789 (NKEEEGERQE) are enriched in basic and acidic residues. 4 PXXP repeats span residues 795–798 (PGQP), 831–834 (PGGP), 872–875 (PGNP), and 890–893 (PGSP). The span at 908–922 (DKSDFITFGKKEETK) shows a compositional bias: basic and acidic residues.

The protein localises to the cell membrane. Potential calcium-dependent cell-adhesion protein. May be involved in the establishment and maintenance of specific neuronal connections in the brain. The protein is Protocadherin alpha-11 (PCDHA11) of Homo sapiens (Human).